The sequence spans 74 residues: Guanine nucleotide-binding protein G(T) subunit gamma-T1 (74 aa).

The residue at position 71 (Cys71) is a Cysteine methyl ester. The S-farnesyl cysteine moiety is linked to residue Cys71. A propeptide spans 72–74 (VIS) (removed in mature form).

This sequence belongs to the G protein gamma family. In terms of assembly, g proteins are composed of 3 units, alpha, beta and gamma. As to expression, retinal rod outer segment.

It localises to the cell membrane. Functionally, guanine nucleotide-binding proteins (G proteins) are involved as a modulator or transducer in various transmembrane signaling systems. The beta and gamma chains are required for the GTPase activity, for replacement of GDP by GTP, and for G protein-effector interaction. This is Guanine nucleotide-binding protein G(T) subunit gamma-T1 (GNGT1) from Bos taurus (Bovine).